A 322-amino-acid chain; its full sequence is Phosphatidylserine decarboxylase proenzyme (322 aa).

Active-site charge relay system; for autoendoproteolytic cleavage activity residues include Asp-90, His-147, and Ser-254. Ser-254 serves as the catalytic Schiff-base intermediate with substrate; via pyruvic acid; for decarboxylase activity. Residue Ser-254 is modified to Pyruvic acid (Ser); by autocatalysis. The tract at residues 296–322 (EPAPLPAEEIKAEHDASPLVDNKKDDT) is disordered. A compositionally biased stretch (basic and acidic residues) spans 303–322 (EEIKAEHDASPLVDNKKDDT).

It belongs to the phosphatidylserine decarboxylase family. PSD-B subfamily. Prokaryotic type I sub-subfamily. As to quaternary structure, heterodimer of a large membrane-associated beta subunit and a small pyruvoyl-containing alpha subunit. Pyruvate is required as a cofactor. Is synthesized initially as an inactive proenzyme. Formation of the active enzyme involves a self-maturation process in which the active site pyruvoyl group is generated from an internal serine residue via an autocatalytic post-translational modification. Two non-identical subunits are generated from the proenzyme in this reaction, and the pyruvate is formed at the N-terminus of the alpha chain, which is derived from the carboxyl end of the proenzyme. The autoendoproteolytic cleavage occurs by a canonical serine protease mechanism, in which the side chain hydroxyl group of the serine supplies its oxygen atom to form the C-terminus of the beta chain, while the remainder of the serine residue undergoes an oxidative deamination to produce ammonia and the pyruvoyl prosthetic group on the alpha chain. During this reaction, the Ser that is part of the protease active site of the proenzyme becomes the pyruvoyl prosthetic group, which constitutes an essential element of the active site of the mature decarboxylase.

The protein resides in the cell membrane. The enzyme catalyses a 1,2-diacyl-sn-glycero-3-phospho-L-serine + H(+) = a 1,2-diacyl-sn-glycero-3-phosphoethanolamine + CO2. The protein operates within phospholipid metabolism; phosphatidylethanolamine biosynthesis; phosphatidylethanolamine from CDP-diacylglycerol: step 2/2. Functionally, catalyzes the formation of phosphatidylethanolamine (PtdEtn) from phosphatidylserine (PtdSer). This is Phosphatidylserine decarboxylase proenzyme from Salmonella dublin (strain CT_02021853).